The following is a 142-amino-acid chain: Putative pre-16S rRNA nuclease (142 aa).

This sequence belongs to the YqgF nuclease family.

The protein localises to the cytoplasm. Could be a nuclease involved in processing of the 5'-end of pre-16S rRNA. The chain is Putative pre-16S rRNA nuclease from Photobacterium profundum (strain SS9).